The following is a 513-amino-acid chain: Ankyrin repeat-containing protein YIL001W (513 aa).

ANK repeat units lie at residues 8–37 (KNFE…NVNS) and 41–70 (FDNS…VCDR). BTB domains lie at 122–179 (RDIT…KFLY) and 274–360 (PDVQ…DIPW).

This is Ankyrin repeat-containing protein YIL001W from Saccharomyces cerevisiae (strain ATCC 204508 / S288c) (Baker's yeast).